The chain runs to 265 residues: Cytochrome c oxidase subunit 3 (265 aa).

The next 6 membrane-spanning stretches (helical) occupy residues 16 to 36 (PWPI…VMYM), 41 to 61 (GGAT…FVWW), 84 to 104 (YGSI…FWAS), 162 to 182 (AVYA…FQGM), 200 to 220 (FLLA…FLIV), and 242 to 262 (AWYW…IYWW).

Belongs to the cytochrome c oxidase subunit 3 family. In terms of assembly, component of the cytochrome c oxidase (complex IV, CIV), a multisubunit enzyme composed of a catalytic core of 3 subunits and several supernumerary subunits. The complex exists as a monomer or a dimer and forms supercomplexes (SCs) in the inner mitochondrial membrane with ubiquinol-cytochrome c oxidoreductase (cytochrome b-c1 complex, complex III, CIII).

The protein localises to the mitochondrion inner membrane. It catalyses the reaction 4 Fe(II)-[cytochrome c] + O2 + 8 H(+)(in) = 4 Fe(III)-[cytochrome c] + 2 H2O + 4 H(+)(out). Functionally, component of the cytochrome c oxidase, the last enzyme in the mitochondrial electron transport chain which drives oxidative phosphorylation. The respiratory chain contains 3 multisubunit complexes succinate dehydrogenase (complex II, CII), ubiquinol-cytochrome c oxidoreductase (cytochrome b-c1 complex, complex III, CIII) and cytochrome c oxidase (complex IV, CIV), that cooperate to transfer electrons derived from NADH and succinate to molecular oxygen, creating an electrochemical gradient over the inner membrane that drives transmembrane transport and the ATP synthase. Cytochrome c oxidase is the component of the respiratory chain that catalyzes the reduction of oxygen to water. Electrons originating from reduced cytochrome c in the intermembrane space (IMS) are transferred via the dinuclear copper A center (CU(A)) of subunit 2 and heme A of subunit 1 to the active site in subunit 1, a binuclear center (BNC) formed by heme A3 and copper B (CU(B)). The BNC reduces molecular oxygen to 2 water molecules using 4 electrons from cytochrome c in the IMS and 4 protons from the mitochondrial matrix. In Zea mays (Maize), this protein is Cytochrome c oxidase subunit 3 (COX3).